The primary structure comprises 199 residues: Protein ZNRD2 (199 aa).

Residue alanine 2 is modified to N-acetylalanine. Positions 53, 56, 70, and 73 each coordinate Zn(2+). The tract at residues 93 to 148 (LSQAREHQLASSTEPASSSRPPSQPPVPRPEHCEGAAAGLKAAQAPPLPAAPPNTD) is disordered. At serine 94 the chain carries Phosphoserine. Low complexity predominate over residues 127–137 (GAAAGLKAAQA). The Nuclear export signal signature appears at 173 to 194 (SLETSIQLCGLIRACAEALGSL).

As to quaternary structure, homodimer. The cofactor is Zn(2+). As to expression, expressed in the early postnatal brain.

The protein resides in the cytoplasm. In terms of biological role, might play a role in mitosis. Could be a centromere-associated protein. Antigenic molecule. May induce anti-centromere antibodies. The polypeptide is Protein ZNRD2 (Znrd2) (Mus musculus (Mouse)).